Consider the following 261-residue polypeptide: ATP synthase subunit a (261 aa).

6 helical membrane-spanning segments follow: residues 45 to 65 (ITNV…ILVL), 107 to 127 (VMTL…PLSF), 133 to 153 (MAVT…LGFM), 162 to 182 (MFWV…IEVI), 209 to 229 (IAGF…VTAI), and 232 to 252 (LELL…CVYL).

This sequence belongs to the ATPase A chain family. As to quaternary structure, F-type ATPases have 2 components, CF(1) - the catalytic core - and CF(0) - the membrane proton channel. CF(1) has five subunits: alpha(3), beta(3), gamma(1), delta(1), epsilon(1). CF(0) has four main subunits: a, b, b' and c.

The protein resides in the cell inner membrane. In terms of biological role, key component of the proton channel; it plays a direct role in the translocation of protons across the membrane. The polypeptide is ATP synthase subunit a (Cereibacter sphaeroides (strain ATCC 17025 / ATH 2.4.3) (Rhodobacter sphaeroides)).